The chain runs to 759 residues: Tripartite motif-containing protein 46 (759 aa).

The interval Met1–Val166 is required for proximal axon localization, axon formation and migration. The RING-type 1; degenerate zinc-finger motif lies at Cys33–Glu59. Residues Ile67–Lys98 are disordered. The segment covering Pro73–Pro89 has biased composition (low complexity). The segment at Cys172–Lys231 adopts an RING-type 2; degenerate zinc-finger fold. Residues Pro222–Val263 form a B box-type zinc finger. Cys227, His230, Cys249, and His255 together coordinate Zn(2+). A coiled-coil region spans residues Glu294 to Arg400. Residue Ser330 is modified to Phosphoserine. The COS domain occupies Leu370–Leu427. The segment at Gln411–Val429 is required for microtubule association, proximal axon localization and axon formation. A Fibronectin type-III domain is found at Val429–Ala528. The 235-residue stretch at Gly513–Glu747 folds into the B30.2/SPRY domain. Ser627 is modified (phosphoserine).

It belongs to the TRIM/RBCC family. In terms of assembly, interacts with TUBB3 and TUBA4A. As to expression, expressed in primary hippocampal and cortical neurons.

The protein localises to the cell projection. It is found in the axon. It localises to the cytoplasm. Its subcellular location is the cytoskeleton. Microtubule-associated protein that is involved in the formation of parallel microtubule bundles linked by cross-bridges in the proximal axon. Required for the uniform orientation and maintenance of the parallel microtubule fascicles, which are important for efficient cargo delivery and trafficking in axons. Thereby also required for proper axon specification, the establishment of neuronal polarity and proper neuronal migration. The sequence is that of Tripartite motif-containing protein 46 from Rattus norvegicus (Rat).